A 267-amino-acid polypeptide reads, in one-letter code: MRVAALISGGKDSCYNMMQCIAEGHQIVALANLRPDENQVESDELDSYMYQTVGHHAIDLYAEAMALPLYRRAIRGRSLETGRVYTQCEGDEVEDLYELLKLVKEKEEIEGVSVGAILSDYQRGRVENVCKRLNLQPLAYLWQRNQEDLLREMIASNIKAIIIKVAALGLDPDKHLGKTLVEMEPYLLELSKKYGVHVCGEGGEYETFTLDCPLFKKKIVVDSSEAVMHSADAFAPVAYLRLSRLHLEEKVSSVPADDETANSIHSS.

The residue at position 97 (Y97) is a Phosphotyrosine.

The protein belongs to the Diphthine--ammonia ligase family.

It carries out the reaction diphthine-[translation elongation factor 2] + NH4(+) + ATP = diphthamide-[translation elongation factor 2] + AMP + diphosphate + H(+). The protein operates within protein modification; peptidyl-diphthamide biosynthesis. Amidase that catalyzes the last step of diphthamide biosynthesis using ammonium and ATP. Diphthamide biosynthesis consists in the conversion of an L-histidine residue in the translation elongation factor 2 (EEF2) to diphthamide. The chain is Diphthine--ammonia ligase (Dph6) from Mus musculus (Mouse).